The primary structure comprises 423 residues: Adenylosuccinate synthetase (423 aa).

GTP contacts are provided by residues 12–18 and 40–42; these read GDEGKGK and GHT. Asp13 acts as the Proton acceptor in catalysis. 2 residues coordinate Mg(2+): Asp13 and Gly40. IMP is bound by residues 13 to 16, 38 to 41, Thr128, Arg142, Gln223, Thr238, and Arg302; these read DEGK and NAGH. The Proton donor role is filled by His41. 298 to 304 serves as a coordination point for substrate; that stretch reads TTTGRPR. GTP is bound by residues Arg304, 330-332, and 412-414; these read RLD and CIG.

This sequence belongs to the adenylosuccinate synthetase family. Homodimer. Mg(2+) serves as cofactor.

It localises to the cytoplasm. The enzyme catalyses IMP + L-aspartate + GTP = N(6)-(1,2-dicarboxyethyl)-AMP + GDP + phosphate + 2 H(+). It functions in the pathway purine metabolism; AMP biosynthesis via de novo pathway; AMP from IMP: step 1/2. In terms of biological role, plays an important role in the de novo pathway of purine nucleotide biosynthesis. Catalyzes the first committed step in the biosynthesis of AMP from IMP. In Dehalococcoides mccartyi (strain ATCC BAA-2266 / KCTC 15142 / 195) (Dehalococcoides ethenogenes (strain 195)), this protein is Adenylosuccinate synthetase.